A 105-amino-acid chain; its full sequence is Met repressor (105 aa).

It belongs to the MetJ family. In terms of assembly, homodimer.

The protein localises to the cytoplasm. Its function is as follows. This regulatory protein, when combined with SAM (S-adenosylmethionine) represses the expression of the methionine regulon and of enzymes involved in SAM synthesis. This is Met repressor from Citrobacter koseri (strain ATCC BAA-895 / CDC 4225-83 / SGSC4696).